The chain runs to 369 residues: Homoserine O-succinyltransferase (369 aa).

The region spanning 49–328 (NAVFICHALT…RFDSTQSARM (280 aa)) is the AB hydrolase-1 domain. Ser154 serves as the catalytic Nucleophile. Residue Arg224 participates in substrate binding. Residues Asp317 and His350 contribute to the active site. Asp351 is a binding site for substrate.

It belongs to the AB hydrolase superfamily. MetX family. Homodimer.

Its subcellular location is the cytoplasm. The enzyme catalyses L-homoserine + succinyl-CoA = O-succinyl-L-homoserine + CoA. It functions in the pathway amino-acid biosynthesis; L-methionine biosynthesis via de novo pathway; O-succinyl-L-homoserine from L-homoserine: step 1/1. Functionally, transfers a succinyl group from succinyl-CoA to L-homoserine, forming succinyl-L-homoserine. This Nocardioides sp. (strain ATCC BAA-499 / JS614) protein is Homoserine O-succinyltransferase.